The chain runs to 439 residues: Trehalose-phosphatase (439 aa).

Mg(2+) is bound by residues Asp163 and Asp165. The active-site Proton donor/acceptor is the Asp165. 282–284 contacts substrate; the sequence is QRK. Asp373 contacts Mg(2+).

The protein belongs to the gob-1 trehalose phosphatase family. The cofactor is Mg(2+). Ubiquitously expressed. Strong expression in intestine.

The catalysed reaction is alpha,alpha-trehalose 6-phosphate + H2O = alpha,alpha-trehalose + phosphate. Catalyzes the hydrolysis of trehalose 6-phosphate to trehalose and phosphate; prevents the accumulation of toxic levels of trehalose 6-phosphate. The polypeptide is Trehalose-phosphatase (Caenorhabditis elegans).